A 526-amino-acid chain; its full sequence is Tyrosine-protein kinase transforming protein Src (526 aa).

Basic residues predominate over residues 1–15 (MGSSKSKPKGPSQRR). A disordered region spans residues 1–59 (MGSSKSKPKGPSQRRRSLEPPDSTHHGGFPASQTPNKTAAPDTHRTPSRSFGTVATEPK). A lipid anchor (N-myristoyl glycine; by host) is attached at glycine 2. Basic and acidic residues predominate over residues 16 to 25 (RSLEPPDSTH). The 62-residue stretch at 81–142 (GGVTTFVALY…PSNYVAPSDS (62 aa)) folds into the SH3 domain. The SH2 domain maps to 148-245 (WYFGKITRRE…GLCHRLTNVC (98 aa)). Residues 267–517 (LRLEVKLGQG…TFEYLQAQLL (251 aa)) enclose the Protein kinase domain. Residues 273-281 (LGQGCFGEV) and lysine 295 contribute to the ATP site. The active-site Proton acceptor is aspartate 386. The residue at position 416 (tyrosine 416) is a Phosphotyrosine; by autocatalysis.

Belongs to the protein kinase superfamily. Tyr protein kinase family. SRC subfamily. Homodimer. Post-translationally, the phosphorylated form is termed pp60v-src.

It catalyses the reaction L-tyrosyl-[protein] + ATP = O-phospho-L-tyrosyl-[protein] + ADP + H(+). Functionally, this phosphoprotein, required for both the initiation and the maintenance of neoplastic transformation, is a protein kinase that catalyzes the phosphorylation of tyrosine residues in vitro. In Rous sarcoma virus subgroup E (strain Schmidt-Ruppin) (RSV-SR-E), this protein is Tyrosine-protein kinase transforming protein Src (V-SRC).